A 52-amino-acid chain; its full sequence is MIFFFNQIRSIFTALHTPTQQIQLSRRAFFQFLGYLGSCVVISLAAQSKYVQ.

Over 1 to 27 (MIFFFNQIRSIFTALHTPTQQIQLSRR) the chain is Mitochondrial intermembrane. A helical transmembrane segment spans residues 28-46 (AFFQFLGYLGSCVVISLAA). Residues 47 to 52 (QSKYVQ) lie on the Cytoplasmic side of the membrane.

The protein belongs to the EMR1 family.

The protein resides in the mitochondrion outer membrane. In terms of biological role, mediates the formation of endoplasmic reticulum (ER)-mitochondria encounter structure (ERMES) foci, thereby contributing to the formation of ER-mitochondrial contact sites. The sequence is that of ERMES regulator 1 from Saccharomyces cerevisiae (strain ATCC 204508 / S288c) (Baker's yeast).